The primary structure comprises 997 residues: MTTAINNNIVNKEFDLKDKTFLASGKTKTIYQLNKEDQYVLIESNSAITAGDGAKKDILPNKDIYSTTTTVNNFKVLQLSGINTHFVKQVEPNAFIAKKCSMIPLEVIVRRLATGSYLKRNTHVTEGTKFNPPLIEFTFKDDVQHDPLVTEQDILEMNLKIGGVPITSKLLSQTRHIATLSFEALERAWQSLDVTLVDFKVEFGITSQGELILADVIDNDSWRIWPKGDKTLMKDKQVYRNLPSALNTPGATPTTQSGPLLNTLSDQQLKMIEDNYAWVATSTEKLVEFTAANLNNNNNNNNNNSNNNNNNTSSTSRSNSLPNVPSITTTPTLHHHHHHHQQQQSGVGNNNNVNSGFQVQLNQPLVGIIMGSQSDWETMKLAANTLTTLGVPFETRIVSAHRTPDRLFEYAKTAKSRGLKIVIAGAGGAAHLPGMVAALTPLPVFGVPVQSKALSGVDSLLSIVQMPAGIPVGTVAIGAAGATNAALLSAAVLAPYYPSIELSLDLYRKKQTDAVAEIPVDNPTSTSTTTTTTTTSNATSILSAIHTSTINSNTSSHNNNQQQQQQQQTILPTQPTIINTPTPVRSSVSRSQSPLPSGNGSSIISQEKTPLSTFVLSTCRPSALVLPPGSTIGILGGGQLARMMAIAAAQLGYKTHIFCPENDPSASHVATYTTKSNYNNYSALDIFARQVDVVTYEFENIMVEPVEYLTKQVAVFPDPKILRTCQDRVLEKTFIQSLDIPTAQFQSVESFNDLKSAIEKIGYPAILKSNTMGYDGKGQVKLTDQVDLEQAWKKVTSETCATKAILEQYIEFESEASVIVARALDGTELTFPLVTNKHRNHILRQTIAPAQLPEYIHKQANEIGLKIARSNGLVGIIAVELFVVKNNETGQYSLMVNELAPRPHNSGHWTIEGCVTSQFEQLIRCVCGLPLGSVDFTKRISEAEFIQQQIPPIVMTNLLGQEVNGWEKILQTKGSHLHIYAKGDAKEGRKMGHVTQQ.

Positions 1-305 (MTTAINNNIV…NNNNNNNNNS (305 aa)) are SAICAR synthetase. Low complexity-rich tracts occupy residues 294-323 (LNNN…SLPN), 342-355 (QQQS…NVNS), and 524-536 (TSTS…TTTS). 4 disordered regions span residues 294 to 355 (LNNN…NVNS), 518 to 538 (IPVD…TSNA), 550 to 569 (INSN…QQQT), and 575 to 604 (PTII…SSII). The tract at residues 305–997 (SNNNNNNTSS…GRKMGHVTQQ (693 aa)) is AIR carboxylase. Residues 575–597 (PTIINTPTPVRSSVSRSQSPLPS) show a composition bias toward low complexity. ATP is bound by residues Arg728, Lys768, Gln779, 807 to 810 (EQYI), and Glu815. One can recognise an ATP-grasp domain in the interval 732 to 927 (KTFIQSLDIP…QFEQLIRCVC (196 aa)). Glu880 and Glu898 together coordinate Mg(2+). ATP is bound at residue 897–898 (NE).

The protein in the N-terminal section; belongs to the SAICAR synthetase family. It in the C-terminal section; belongs to the AIR carboxylase family. Class I subfamily. It depends on Mg(2+) as a cofactor. Mn(2+) is required as a cofactor.

The enzyme catalyses 5-amino-1-(5-phospho-D-ribosyl)imidazole-4-carboxylate + L-aspartate + ATP = (2S)-2-[5-amino-1-(5-phospho-beta-D-ribosyl)imidazole-4-carboxamido]succinate + ADP + phosphate + 2 H(+). It catalyses the reaction 5-amino-1-(5-phospho-D-ribosyl)imidazole-4-carboxylate + H(+) = 5-amino-1-(5-phospho-beta-D-ribosyl)imidazole + CO2. The protein operates within purine metabolism; IMP biosynthesis via de novo pathway; 5-amino-1-(5-phospho-D-ribosyl)imidazole-4-carboxylate from 5-amino-1-(5-phospho-D-ribosyl)imidazole (carboxylase route): step 1/1. Its pathway is purine metabolism; IMP biosynthesis via de novo pathway; 5-amino-1-(5-phospho-D-ribosyl)imidazole-4-carboxamide from 5-amino-1-(5-phospho-D-ribosyl)imidazole-4-carboxylate: step 1/2. Functionally, bifunctional enzyme involved in de novo IMP synthesis, an essential step for de nove purine synthesis. This is Bifunctional purine synthesis protein purC/E (purC/E) from Dictyostelium discoideum (Social amoeba).